We begin with the raw amino-acid sequence, 364 residues long: Aminomethyltransferase (364 aa).

This sequence belongs to the GcvT family. In terms of assembly, the glycine cleavage system is composed of four proteins: P, T, L and H.

The catalysed reaction is N(6)-[(R)-S(8)-aminomethyldihydrolipoyl]-L-lysyl-[protein] + (6S)-5,6,7,8-tetrahydrofolate = N(6)-[(R)-dihydrolipoyl]-L-lysyl-[protein] + (6R)-5,10-methylene-5,6,7,8-tetrahydrofolate + NH4(+). In terms of biological role, the glycine cleavage system catalyzes the degradation of glycine. The chain is Aminomethyltransferase from Photorhabdus laumondii subsp. laumondii (strain DSM 15139 / CIP 105565 / TT01) (Photorhabdus luminescens subsp. laumondii).